We begin with the raw amino-acid sequence, 171 residues long: Myosin regulatory light polypeptide 9 (171 aa).

A compositionally biased stretch (basic residues) spans 1-15 (MSSKRAKAKTTKKRP). A disordered region spans residues 1–21 (MSSKRAKAKTTKKRPQSATSN). S2 is subject to N-acetylserine. Position 19 is a phosphothreonine; by MLCK, CIT and ROCK2 (T19). A Phosphoserine; by CDC42BP, CIT, MLCK, PAK1, ROCK1, ROCK2, DAPK1, DAPK2 and ZIPK/DAPK3 modification is found at S20. EF-hand domains are found at residues 29–64 (SQIQ…LGKN) and 98–133 (DPED…MGDR). 4 residues coordinate Ca(2+): D42, N44, D46, and D53.

In terms of assembly, myosin is a hexamer of 2 heavy chains and 4 light chains: interacts with myosin heavy chain MYO19. Interacts with LUZP1; the interaction results in inhibition of phosphorylation of MYL9 by DAPK3. In terms of processing, phosphorylation increases the actin-activated myosin ATPase activity and thereby regulates the contractile activity. It is required to generate the driving force in the migration of the cells but not necessary for localization of myosin-2 at the leading edge. Phosphorylation is required for myotube formation. Phosphorylated by DAPK3; DAPK3-mediated phosphorylation is inhibited by LUZP1. As to expression, smooth muscle tissues and in some, but not all, nonmuscle cells.

The protein localises to the cytoplasm. It is found in the cytoskeleton. Its subcellular location is the cell cortex. In terms of biological role, myosin regulatory subunit that plays an important role in regulation of both smooth muscle and nonmuscle cell contractile activity via its phosphorylation. Implicated in cytokinesis, receptor capping, and cell locomotion. In myoblasts, may regulate PIEZO1-dependent cortical actomyosin assembly involved in myotube formation. The sequence is that of Myosin regulatory light polypeptide 9 (Myl9) from Rattus norvegicus (Rat).